The following is a 210-amino-acid chain: Thymidylate kinase (210 aa).

Residue 11-18 participates in ATP binding; it reads GLEGAGKS.

The protein belongs to the thymidylate kinase family.

It catalyses the reaction dTMP + ATP = dTDP + ADP. In terms of biological role, phosphorylation of dTMP to form dTDP in both de novo and salvage pathways of dTTP synthesis. This is Thymidylate kinase from Histophilus somni (strain 2336) (Haemophilus somnus).